We begin with the raw amino-acid sequence, 3391 residues long: MNDQRKEAKNTPFNMLKRERNRVSTVQQLTKRFSLGMLQGRGPLKLYMALVAFLRFLTIPPTAGILKRWGTIKKSKAINVLRGFRKEIGRMLNILNRRRRSAGMIIMLIPTVMAFHLTTRNGEPHMIVSRQEKGKSLLFKTEVGVNMCTLMAMDLGELCEDTITYKCPLLRQNEPEDIDCWCNSTSTWVTYGTCTTMGEHRREKRSVALVPHVGMGLETRTETWMSSEGAWKHVQRIETWILRHPGFTMMAAILAYTIGTTHFQRALILILLTAVTPSMTMRCIGMSNRDFVEGVSGGSWVDIVLEHGSCVTTMAKNKPTLDFELIKTEAKQPATLRKYCIEAKLTNTTTESRCPTQGEPSLNEEQDKRFVCKHSMVDRGWGNGCGLFGKGGIVTCAMFRCKKNMEGKVVQPENLEYTIVITPHSGEEHAVGNDTGKHGKEIKITPQSSITEAELTGYGTITMECSPRTGLDFNEIVLLQMENKAWLVHRQWFLDLPLPWLPGADTQGSNWIQKETLVTFKNPHAKKQDVVVLGSQEGAMHTALTGATEIQMSSGNLLFTGHLKCRLRMDKLQLKGMSYSMCTGKFKVVKEIAETQHGTIVIRVQYEGDGSPCKIPFEIMDLEKRHVLGRLITVNPIVTEKDSPVNIEAEPPFGDSYIIIGVEPGQLKLNWFKKGSSIGQMFETTMRGAKRMAILGDTAWDFGSLGGVFTSIGKALHQVFGAIYGAAFSGVSWTMKILIGVIITWIGMNSRSTSLSVTLVLVGIVTLYLGVMVQADSGCVVSWKNKELKCGSGIFITDNVHTWTEQYKFQPESPSKLASAIQKAHEEDICGIRSVTRLENLMWKQITPELNHILSENEVKLTIMTGDIKGIMQAGKRSLRPQPTELKYSWKTWGKAKMLSTESHNQTFFIDGPETAECPNTNRAWNSLEVEDYGFGVFTTNIWLKLKEKQDVFCDSKLMSAAIKDNRAVHADMGYWIESALNDTWKIEKASFIEVKNCHWPKSHTLWSNGVLESEMIIPKNLAGPVSKHNYRPGYHTQITGPWHLGKLEMDFDFCDGTTVVVTEDCGNRGPSLRTTTASGKLITEWCCRSCTLPPLRYRGEDGCWYGMEIRPLKEKEENLVNSLVTAGHGQVDNFSLGVLGMALFLEEMLRTRVGTKHAILLVAVSFVTLIIGNRSFRDLGRVMVMVGATMTDDIGMGVTYLALLAAFKVRPTFAAGLLLRKLTSKELMMTTIGIVLSSQSTIPETILELTDALALGMMVLKMVRNMEKYQLAVTIMAILCVPNAVILQNAWKVSCTILAVVSVSPLFLTSSQQKTDWIPLALTIKGLNPTAIFLTTLSRTSKKRSWPLNEAIMAVGMVSILASSLLKNDIPMTGPLVAGGLLTVCYVLTGRSADLELERAADVKWEDQAEISGSSPILSITISEDGSMSIKNEEEEQTLTILIRRGLLVISGLFPVSIPITAAAWYLWEVKKQRAGVLWDVPSPPPMGKAELEDGAYRIKQKGILGYSQIGAGVYKEGTFHTMWHVTRGAVLMHKGKRIEPSWADVKKDLISYGGGWKLEGEWKEGEEVQVLALDPGKNPRAVQTKPGLFKTNAGTIGAVSLDFSPGTSGSPIIDKKGKVVGLYGNGVVTRSGAYVSAIAQTEKSIEDNPEIEDDIFRKRRLTIMDLHPGAGKTKRYLPAIVREAIKRGLRTLILAPTRVVAAEMEEALRGLPIRYQTPAIRAEHTGREIVDLMCHATFTMRLLSPVRVPNYNLIIMDEAHFTDPASIAARGYISTRVEMGEAAGIFMTATPPGSRDPFPQSNAPIIDEEREIPERSWNSGHEWVTDFKGKTVWFVPSIKAGNDIAACLRKNGKKVIQLSRKTFDSEYVKTRTNDWDFVVTTDISEMGANFKAERVIDPRRCMKPVILTDGEERVILAGPMPVTHSSAAQRRGRIGRNPKNENDQYIYMGEPLENDEDCAHWKEAKMLLDNINTPEGIIPSMFEPEREKVDAIDGEYRLRGEARTTFVDLMRRGDLPVWLAYRVAAEGINYADRRWCFDGVKNNQILEENVEVEIWTKEGERKKLKPRWLDARIYSDPLALKEFKEFAAGRKSLTLNLITEMGRLPTFMTQKARNALDNLAVLHTAEAGGRAYNHALSELPETLETLLLLTLLATVTGGIFLFLMSARGIGKMTLGMCCIITASILLWYAQIQPHWIAASIILEFFLIVLLIPEPEKQRTPQDNQLTYVVIAILTVVAATMANEMGFLEKTKKDLGLGSIATQQPESNILDIDLRPASAWTLYAVATTFVTPMLRHSIENSSVNVSLTAIANQATVLMGLGKGWPLSKMDIGVPLLAIGCYSQVNPTTLTAALFLLVAHYAIIGPALQAKASREAQKRAAAGIMKNPTVDGITVIDLDPIPYDPKFEKQLGQVMLLVLCVTQVLMMRTTWALCEALTLATGPISTLSEGNPGRFWNTTIAVSMANIFRGSYLAGAGLLFSIMKNTTNTRRVTGNIGETLGEKWKSRLNALGKSEFQIYKKSGIQEVDRTLAKEGIKRGETDHHAVSRGSAKLRWFVERNMVTPEGKVVDLGCGRGGWSYYCGGLKNVREVKGLTKGGPGHEEPIPMSTYGWNLVRLQSGVDVFFIPPEKCDTLLCDIGESSPNPTVEAGRTLRVLNLVENWLNNNTQFCIKVLNPYMPSVIEKMEALQRKYGGALVRNPLSRNSTHEMYWVSNASGNIVSSVNMISRMLINRFTMRYKKATYEPDVDLGSGTRNIGIESEIPNLDIIGKRIEKIKQEHETSWHYDQDHPYKTWAYHGSYETKQTGSASSMVNGVFRLLTKPWDVVPMVTQMAMTDTTPFGQQRVFKEKVDTRTQEPKEGTKKLMKITAEWLWKELGKKKTPRMCTREEFTRKVRSNAALGAIFTDENKWKSAREAVEDSRFWELVDKERNLHLEGKCETCVYNIMGKREKKLGEFGKAKGSRAIWYMWLGARFLEFEALGFLNEDHWFSRENSLSGVEGEGLHKLGYILRDVSKKEGGAMYADDTAGWDTRITLEDLKNEEMVTNHMEGEHKKLAEAIFKLTYQNKVVRVQRPTPRGTVMDIISRRDQRGSGQVGTYGLNTFTNMEAQLIRQMEGEGVFKSIQHLTITEEIAVQNWLARVGRERLSRMAISGDDCVVKPLDDRLPSALTALNDMGKIRKDIQQWEPSRGWNDWTQVPFCSHHFHELIMKDGRVLVVPCRNQDELIGRARISQGAGWSLRETACLGKSYAQMWSLMYFHRRDLRLAANAICSAVPSHWVPTSRTTWSIHAKHEWMTTEDMLTVWNRVWIQENPWMEDKTPVESWEEIPYLGKREDQWCGSLIGLTSRATWAKNIQAAINQVRSLIGNEEYTDYMPSMKRFRREEEEAGVLW.

Positions 1-15 are interaction with host EXOC1; the sequence is MNDQRKEAKNTPFNM. The Cytoplasmic portion of the chain corresponds to 1 to 101; it reads MNDQRKEAKN…LNILNRRRRS (101 aa). Positions 37–72 are hydrophobic; homodimerization of capsid protein C; that stretch reads MLQGRGPLKLYMALVAFLRFLTIPPTAGILKRWGTI. A propeptide spans 101-114 (ER anchor for the Capsid protein C, removed in mature form by serine protease NS3); the sequence is SAGMIIMLIPTVMA. Residues 101 to 114 constitute a propeptide, ER anchor for the capsid protein C, removed in mature form by serine protease NS3; sequence SAGMIIMLIPTVMA. The chain crosses the membrane as a helical span at residues 102–122; the sequence is AGMIIMLIPTVMAFHLTTRNG. The Extracellular portion of the chain corresponds to 123–242; that stretch reads EPHMIVSRQE…HVQRIETWIL (120 aa). N-linked (GlcNAc...) asparagine; by host glycosylation is present at Asn-183. The chain crosses the membrane as a helical span at residues 243–260; that stretch reads RHPGFTMMAAILAYTIGT. Residue Thr-261 is a topological domain, cytoplasmic. Residues 262-280 form a helical membrane-spanning segment; it reads HFQRALILILLTAVTPSMT. The Extracellular segment spans residues 281 to 727; that stretch reads MRCIGMSNRD…QVFGAIYGAA (447 aa). 4 disulfides stabilise this stretch: Cys-283–Cys-310, Cys-340–Cys-401, Cys-354–Cys-385, and Cys-372–Cys-396. Asn-347 is a glycosylation site (N-linked (GlcNAc...) asparagine; by host). Positions 378-391 are fusion peptide; the sequence is DRGWGNGCGLFGKG. Asn-433 carries N-linked (GlcNAc...) asparagine; by host glycosylation. Disulfide bonds link Cys-465–Cys-565 and Cys-582–Cys-613. A helical transmembrane segment spans residues 728–748; that stretch reads FSGVSWTMKILIGVIITWIGM. The Cytoplasmic segment spans residues 749 to 752; sequence NSRS. A helical transmembrane segment spans residues 753–773; the sequence is TSLSVTLVLVGIVTLYLGVMV. Topologically, residues 774 to 1195 are extracellular; that stretch reads QADSGCVVSW…MVGATMTDDI (422 aa). Disulfide bonds link Cys-779–Cys-790, Cys-830–Cys-918, Cys-954–Cys-998, Cys-1055–Cys-1104, Cys-1066–Cys-1088, and Cys-1087–Cys-1091. N-linked (GlcNAc...) asparagine; by host glycans are attached at residues Asn-905 and Asn-982. An N-linked (GlcNAc...) asparagine; by host glycan is attached at Asn-1134. A helical membrane pass occupies residues 1196 to 1220; sequence GMGVTYLALLAAFKVRPTFAAGLLL. Residues 1221-1226 lie on the Cytoplasmic side of the membrane; the sequence is RKLTSK. The chain crosses the membrane as a helical span at residues 1227–1245; it reads ELMMTTIGIVLSSQSTIPE. The Lumenal segment spans residues 1246–1269; the sequence is TILELTDALALGMMVLKMVRNMEK. A helical transmembrane segment spans residues 1270–1290; it reads YQLAVTIMAILCVPNAVILQN. Residue Ala-1291 is a topological domain, cytoplasmic. Residues 1292–1310 form a helical membrane-spanning segment; the sequence is WKVSCTILAVVSVSPLFLT. Residues 1311-1317 are Lumenal-facing; that stretch reads SSQQKTD. The chain crosses the membrane as a helical span at residues 1318 to 1338; sequence WIPLALTIKGLNPTAIFLTTL. The Cytoplasmic portion of the chain corresponds to 1339 to 1346; that stretch reads SRTSKKRS. The helical transmembrane segment at 1347–1367 threads the bilayer; the sequence is WPLNEAIMAVGMVSILASSLL. Over 1368 to 1370 the chain is Lumenal; the sequence is KND. A helical transmembrane segment spans residues 1371-1391; it reads IPMTGPLVAGGLLTVCYVLTG. The Cytoplasmic segment spans residues 1392 to 1447; the sequence is RSADLELERAADVKWEDQAEISGSSPILSITISEDGSMSIKNEEEEQTLTILIRRG. The tract at residues 1398-1437 is interacts with and activates NS3 protease; sequence LERAADVKWEDQAEISGSSPILSITISEDGSMSIKNEEEE. An intramembrane region (helical) is located at residues 1448-1468; that stretch reads LLVISGLFPVSIPITAAAWYL. Topologically, residues 1469–2147 are cytoplasmic; that stretch reads WEVKKQRAGV…LSELPETLET (679 aa). One can recognise a Peptidase S7 domain in the interval 1476 to 1653; it reads AGVLWDVPSP…EKSIEDNPEI (178 aa). Catalysis depends on charge relay system; for serine protease NS3 activity residues His-1526, Asp-1550, and Ser-1610. The Helicase ATP-binding domain occupies 1655–1811; that stretch reads DDIFRKRRLT…QSNAPIIDEE (157 aa). Residues 1659-1662 are important for RNA-binding; sequence RKRR. 1668 to 1675 contacts ATP; sequence LHPGAGKT. The short motif at 1759 to 1762 is the DEAH box element; the sequence is DEAH. One can recognise a Helicase C-terminal domain in the interval 1821–1988; it reads SGHEWVTDFK…IIPSMFEPER (168 aa). Lys-1863 carries the post-translational modification N6-acetyllysine; by host. A helical membrane pass occupies residues 2148-2168; it reads LLLLTLLATVTGGIFLFLMSA. At 2169-2170 the chain is on the lumenal side; that stretch reads RG. Positions 2171-2191 form an intramembrane region, helical; that stretch reads IGKMTLGMCCIITASILLWYA. Position 2192 (Gln-2192) is a topological domain, lumenal. The helical transmembrane segment at 2193–2213 threads the bilayer; the sequence is IQPHWIAASIILEFFLIVLLI. Residues 2214–2228 lie on the Cytoplasmic side of the membrane; that stretch reads PEPEKQRTPQDNQLT. Residues 2229 to 2249 traverse the membrane as a helical segment; sequence YVVIAILTVVAATMANEMGFL. At 2250 to 2274 the chain is on the lumenal side; that stretch reads EKTKKDLGLGSIATQQPESNILDID. An intramembrane region (helical) is located at residues 2275-2295; the sequence is LRPASAWTLYAVATTFVTPML. Residues 2296–2316 lie on the Lumenal side of the membrane; sequence RHSIENSSVNVSLTAIANQAT. Asn-2301 and Asn-2305 each carry an N-linked (GlcNAc...) asparagine; by host glycan. The segment at residues 2317–2337 is an intramembrane region (helical); sequence VLMGLGKGWPLSKMDIGVPLL. Residues 2338–2347 are Lumenal-facing; it reads AIGCYSQVNP. Residues 2348-2368 traverse the membrane as a helical segment; sequence TTLTAALFLLVAHYAIIGPAL. Residues 2369–2413 are Cytoplasmic-facing; the sequence is QAKASREAQKRAAAGIMKNPTVDGITVIDLDPIPYDPKFEKQLGQ. The chain crosses the membrane as a helical span at residues 2414–2434; it reads VMLLVLCVTQVLMMRTTWALC. Topologically, residues 2435–2459 are lumenal; the sequence is EALTLATGPISTLSEGNPGRFWNTT. Asn-2457 carries an N-linked (GlcNAc...) asparagine; by host glycan. The helical transmembrane segment at 2460-2480 threads the bilayer; the sequence is IAVSMANIFRGSYLAGAGLLF. The Cytoplasmic segment spans residues 2481–3391; that stretch reads SIMKNTTNTR…REEEEAGVLW (911 aa). Residues 2493–2755 enclose the mRNA cap 0-1 NS5-type MT domain; sequence TGNIGETLGE…DVDLGSGTRN (263 aa). Ser-2547 is a binding site for S-adenosyl-L-methionine. At Ser-2547 the chain carries Phosphoserine. The active-site For 2'-O-MTase activity is the Lys-2552. The short motif at 2568 to 2571 is the SUMO-interacting motif element; it reads VVDL. S-adenosyl-L-methionine is bound by residues Gly-2577, Trp-2578, Thr-2595, Lys-2596, Asp-2622, and Val-2623. Asp-2637 functions as the For 2'-O-MTase activity in the catalytic mechanism. Ile-2638 contacts S-adenosyl-L-methionine. Active-site for 2'-O-MTase activity residues include Lys-2672 and Glu-2708. An S-adenosyl-L-methionine-binding site is contributed by Tyr-2710. 4 residues coordinate Zn(2+): Glu-2929, His-2933, Cys-2938, and Cys-2941. Residues 3020–3169 form the RdRp catalytic domain; the sequence is AMYADDTAGW…PLDDRLPSAL (150 aa). Residues His-3203, Cys-3219, and Cys-3338 each coordinate Zn(2+).

The protein in the N-terminal section; belongs to the class I-like SAM-binding methyltransferase superfamily. mRNA cap 0-1 NS5-type methyltransferase family. Homodimer. Interacts (via N-terminus) with host EXOC1 (via C-terminus); this interaction results in EXOC1 degradation through the proteasome degradation pathway. As to quaternary structure, forms heterodimers with envelope protein E in the endoplasmic reticulum and Golgi. In terms of assembly, homodimer; in the endoplasmic reticulum and Golgi. Interacts with protein prM. Interacts with non-structural protein 1. Homodimer; Homohexamer when secreted. Interacts with envelope protein E. Interacts with host PRKAA1. As to quaternary structure, interacts (via N-terminus) with serine protease NS3. In terms of assembly, forms a heterodimer with serine protease NS3. May form homooligomers. Forms a heterodimer with NS2B. Interacts with NS4B. Interacts with unphosphorylated RNA-directed RNA polymerase NS5; this interaction stimulates RNA-directed RNA polymerase NS5 guanylyltransferase activity. Interacts with host SHFL. As to quaternary structure, interacts with host MAVS; this interaction inhibits the synthesis of IFN-beta. Interacts with host SHFL. Interacts with host AUP1; the interaction occurs in the presence of Dengue virus NS4B and induces lipophagy which facilitates production of virus progeny particles. May interact with host SRPRA and SEC61G. In terms of assembly, interacts with serine protease NS3. Homodimer. Interacts with host STAT2; this interaction inhibits the phosphorylation of the latter, and, when all viral proteins are present (polyprotein), targets STAT2 for degradation. Interacts with serine protease NS3. Interacts with host PAF1 complex; the interaction may prevent the recruitment of the PAF1 complex to interferon-responsive genes, and thus reduces the immune response. Specific enzymatic cleavages in vivo yield mature proteins. Cleavages in the lumen of endoplasmic reticulum are performed by host signal peptidase, whereas cleavages in the cytoplasmic side are performed by serine protease NS3. Signal cleavage at the 2K-4B site requires a prior NS3 protease-mediated cleavage at the 4A-2K site. Post-translationally, cleaved in post-Golgi vesicles by a host furin, releasing the mature small envelope protein M, and peptide pr. This cleavage is incomplete as up to 30% of viral particles still carry uncleaved prM. In terms of processing, N-glycosylated. N-glycosylated. The excreted form is glycosylated and this is required for efficient secretion of the protein from infected cells. Post-translationally, acetylated by host KAT5. Acetylation modulates NS3 RNA-binding and unwinding activities and plays an important positive role for viral replication. In terms of processing, sumoylation of RNA-directed RNA polymerase NS5 increases NS5 protein stability allowing proper viral RNA replication. Phosphorylated on serines residues. This phosphorylation may trigger NS5 nuclear localization.

It is found in the virion. The protein resides in the host nucleus. Its subcellular location is the host cytoplasm. It localises to the host perinuclear region. The protein localises to the secreted. It is found in the virion membrane. The protein resides in the host endoplasmic reticulum membrane. Its subcellular location is the host mitochondrion. It catalyses the reaction Selective hydrolysis of -Xaa-Xaa-|-Yaa- bonds in which each of the Xaa can be either Arg or Lys and Yaa can be either Ser or Ala.. It carries out the reaction RNA(n) + a ribonucleoside 5'-triphosphate = RNA(n+1) + diphosphate. The catalysed reaction is a ribonucleoside 5'-triphosphate + H2O = a ribonucleoside 5'-diphosphate + phosphate + H(+). The enzyme catalyses ATP + H2O = ADP + phosphate + H(+). It catalyses the reaction a 5'-end (5'-triphosphoguanosine)-ribonucleoside in mRNA + S-adenosyl-L-methionine = a 5'-end (N(7)-methyl 5'-triphosphoguanosine)-ribonucleoside in mRNA + S-adenosyl-L-homocysteine. It carries out the reaction a 5'-end (N(7)-methyl 5'-triphosphoguanosine)-ribonucleoside in mRNA + S-adenosyl-L-methionine = a 5'-end (N(7)-methyl 5'-triphosphoguanosine)-(2'-O-methyl-ribonucleoside) in mRNA + S-adenosyl-L-homocysteine + H(+). In terms of biological role, plays a role in virus budding by binding to the cell membrane and gathering the viral RNA into a nucleocapsid that forms the core of a mature virus particle. During virus entry, may induce genome penetration into the host cytoplasm after hemifusion induced by the surface proteins. Can migrate to the cell nucleus where it modulates host functions. Overcomes the anti-viral effects of host EXOC1 by sequestering and degrading the latter through the proteasome degradation pathway. Its function is as follows. Inhibits RNA silencing by interfering with host Dicer. Functionally, prevents premature fusion activity of envelope proteins in trans-Golgi by binding to envelope protein E at pH6.0. After virion release in extracellular space, gets dissociated from E dimers. Acts as a chaperone for envelope protein E during intracellular virion assembly by masking and inactivating envelope protein E fusion peptide. prM is the only viral peptide matured by host furin in the trans-Golgi network probably to avoid catastrophic activation of the viral fusion activity in acidic Golgi compartment prior to virion release. prM-E cleavage is inefficient, and many virions are only partially matured. These uncleaved prM would play a role in immune evasion. In terms of biological role, may play a role in virus budding. Exerts cytotoxic effects by activating a mitochondrial apoptotic pathway through M ectodomain. May display a viroporin activity. Its function is as follows. Binds to host cell surface receptor and mediates fusion between viral and cellular membranes. Envelope protein is synthesized in the endoplasmic reticulum in the form of heterodimer with protein prM. They play a role in virion budding in the ER, and the newly formed immature particle is covered with 60 spikes composed of heterodimer between precursor prM and envelope protein E. The virion is transported to the Golgi apparatus where the low pH causes dissociation of PrM-E heterodimers and formation of E homodimers. prM-E cleavage is inefficient, and many virions are only partially matured. These uncleaved prM would play a role in immune evasion. Functionally, involved in immune evasion, pathogenesis and viral replication. Once cleaved off the polyprotein, is targeted to three destinations: the viral replication cycle, the plasma membrane and the extracellular compartment. Essential for viral replication. Required for formation of the replication complex and recruitment of other non-structural proteins to the ER-derived membrane structures. Excreted as a hexameric lipoparticle that plays a role against host immune response. Antagonizing the complement function. Binds to the host macrophages and dendritic cells. Inhibits signal transduction originating from Toll-like receptor 3 (TLR3). Mediates complement activation, which may contribute to the pathogenesis of the vascular leakage that occurs in severe dengue disease. Activates autophagy through the AMPK/ERK/mTOR signaling pathway. Mechanistically, acts as the assembly platform for STK11-AMPK interactions and promotes STK11-AMPK interactions. In turn, promotes phosphorylation of the AMPK kinase structural domain and activates AMPK, thereby positively regulating the AMPK/ERK/mTOR signaling pathway and inducing autophagy. Disrupts the host endothelial glycocalyx layer of host pulmonary microvascular endothelial cells, inducing degradation of sialic acid and shedding of heparan sulfate proteoglycans. NS1 induces expression of sialidases, heparanase, and activates cathepsin L, which activates heparanase via enzymatic cleavage. These effects are probably linked to the endothelial hyperpermeability observed in severe dengue disease. In terms of biological role, component of the viral RNA replication complex that functions in virion assembly and antagonizes the host immune response. Its function is as follows. Required cofactor for the serine protease function of NS3. May have membrane-destabilizing activity and form viroporins. Functionally, displays three enzymatic activities: serine protease, NTPase and RNA helicase. NS3 serine protease, in association with NS2B, performs its autocleavage and cleaves the polyprotein at dibasic sites in the cytoplasm: C-prM, NS2A-NS2B, NS2B-NS3, NS3-NS4A, NS4A-2K and NS4B-NS5. NS3 RNA helicase binds RNA and unwinds dsRNA in the 3' to 5' direction. Regulates the ATPase activity of the NS3 helicase activity. NS4A allows NS3 helicase to conserve energy during unwinding. Plays a role in the inhibition of the host innate immune response. Interacts with host MAVS and thereby prevents the interaction between RIGI and MAVS. In turn, IFN-beta production is impaired. Interacts with host AUP1 which mediates induction of lipophagy in host cells and facilitates production of virus progeny particles. In terms of biological role, functions as a signal peptide for NS4B and is required for the interferon antagonism activity of the latter. Its function is as follows. Induces the formation of ER-derived membrane vesicles where the viral replication takes place. Inhibits interferon (IFN)-induced host STAT1 phosphorylation and nuclear translocation, thereby preventing the establishment of cellular antiviral state by blocking the IFN-alpha/beta pathway. Functionally, replicates the viral (+) and (-) RNA genome, and performs the capping of genomes in the cytoplasm. NS5 methylates viral RNA cap at guanine N-7 and ribose 2'-O positions. Besides its role in RNA genome replication, also prevents the establishment of cellular antiviral state by blocking the interferon-alpha/beta (IFN-alpha/beta) signaling pathway. Inhibits host TYK2 and STAT2 phosphorylation, thereby preventing activation of JAK-STAT signaling pathway. May reduce immune responses by preventing the recruitment of the host PAF1 complex to interferon-responsive genes. The sequence is that of Genome polyprotein from Dengue virus type 2 (strain 16681-PDK53) (DENV-2).